We begin with the raw amino-acid sequence, 427 residues long: Serine hydroxymethyltransferase (427 aa).

(6S)-5,6,7,8-tetrahydrofolate is bound by residues leucine 122 and 126 to 128 (GHL). Lysine 231 is subject to N6-(pyridoxal phosphate)lysine. 355–357 (SPF) lines the (6S)-5,6,7,8-tetrahydrofolate pocket.

Belongs to the SHMT family. In terms of assembly, homodimer. Requires pyridoxal 5'-phosphate as cofactor.

It is found in the cytoplasm. The enzyme catalyses (6R)-5,10-methylene-5,6,7,8-tetrahydrofolate + glycine + H2O = (6S)-5,6,7,8-tetrahydrofolate + L-serine. It participates in one-carbon metabolism; tetrahydrofolate interconversion. The protein operates within amino-acid biosynthesis; glycine biosynthesis; glycine from L-serine: step 1/1. In terms of biological role, catalyzes the reversible interconversion of serine and glycine with tetrahydrofolate (THF) serving as the one-carbon carrier. This reaction serves as the major source of one-carbon groups required for the biosynthesis of purines, thymidylate, methionine, and other important biomolecules. Also exhibits THF-independent aldolase activity toward beta-hydroxyamino acids, producing glycine and aldehydes, via a retro-aldol mechanism. The protein is Serine hydroxymethyltransferase of Synechococcus sp. (strain ATCC 27144 / PCC 6301 / SAUG 1402/1) (Anacystis nidulans).